Reading from the N-terminus, the 145-residue chain is Bacilliredoxin SAOUHSC_01610 (145 aa).

The protein belongs to the bacilliredoxin family.

This Staphylococcus aureus (strain NCTC 8325 / PS 47) protein is Bacilliredoxin SAOUHSC_01610.